We begin with the raw amino-acid sequence, 249 residues long: 2-C-methyl-D-erythritol 4-phosphate cytidylyltransferase (249 aa).

The protein belongs to the IspD/TarI cytidylyltransferase family. IspD subfamily.

The enzyme catalyses 2-C-methyl-D-erythritol 4-phosphate + CTP + H(+) = 4-CDP-2-C-methyl-D-erythritol + diphosphate. Its pathway is isoprenoid biosynthesis; isopentenyl diphosphate biosynthesis via DXP pathway; isopentenyl diphosphate from 1-deoxy-D-xylulose 5-phosphate: step 2/6. In terms of biological role, catalyzes the formation of 4-diphosphocytidyl-2-C-methyl-D-erythritol from CTP and 2-C-methyl-D-erythritol 4-phosphate (MEP). This Thermobifida fusca (strain YX) protein is 2-C-methyl-D-erythritol 4-phosphate cytidylyltransferase.